Here is a 295-residue protein sequence, read N- to C-terminus: Protoheme IX farnesyltransferase 2 (295 aa).

A run of 9 helical transmembrane segments spans residues 9–29 (ITKPGIIFGNVLSVAGGFFLA), 36–56 (FALFLAVVIGTSLVVASGCVF), 83–103 (LTLALVYATLLGVAGFSLLYV), 108–128 (LSAFCALIGFIVYVGFYSLWL), 135–155 (GTLVGSLSGAMPPVIGYCAVS), 163–183 (VTLLVMFSLWQMPHSFAIAIF), 209–229 (IVLYVLAFVLATLMLTLGGYA), 230–250 (GLGYLAVAAAMGLYWLYMAWG), and 264–284 (VFGFSILTVTALSVMMGVDSQ).

It belongs to the UbiA prenyltransferase family. Protoheme IX farnesyltransferase subfamily.

It localises to the cell inner membrane. The enzyme catalyses heme b + (2E,6E)-farnesyl diphosphate + H2O = Fe(II)-heme o + diphosphate. It functions in the pathway porphyrin-containing compound metabolism; heme O biosynthesis; heme O from protoheme: step 1/1. Functionally, converts heme B (protoheme IX) to heme O by substitution of the vinyl group on carbon 2 of heme B porphyrin ring with a hydroxyethyl farnesyl side group. This is Protoheme IX farnesyltransferase 2 from Pseudomonas putida (strain W619).